Here is a 58-residue protein sequence, read N- to C-terminus: uncharacterized protein (58 aa).

It is found in the plastid. The protein resides in the chloroplast. This is an uncharacterized protein from Chlamydomonas reinhardtii (Chlamydomonas smithii).